The sequence spans 306 residues: Pantothenate kinase (306 aa).

G91–S98 provides a ligand contact to ATP.

Belongs to the prokaryotic pantothenate kinase family.

The protein resides in the cytoplasm. The catalysed reaction is (R)-pantothenate + ATP = (R)-4'-phosphopantothenate + ADP + H(+). It functions in the pathway cofactor biosynthesis; coenzyme A biosynthesis; CoA from (R)-pantothenate: step 1/5. The polypeptide is Pantothenate kinase (Streptococcus pyogenes serotype M12 (strain MGAS2096)).